The following is a 1045-amino-acid chain: Collagen alpha-1(VI) chain (1045 aa).

An N-terminal signal peptide occupies residues 1–24 (MKMLQGRLPLTVLHLFLLLGGGMT). Residues 65–255 (DIFFVLDTSE…LTDDEIDNTI (191 aa)) form the VWFA 1 domain. The segment at 277–613 (PSRGLSGPSG…GPPGPGGPPG (337 aa)) is disordered. The segment at 280-540 (GLSGPSGPPG…RGDDGRPGNG (261 aa)) is triple-helical region. Residues 297 to 309 (PGLPGDRGLPGDP) are compositionally biased toward low complexity. Over residues 327–360 (QGIRGEKGGRGAKGSKGDKGKRGIDGVDGQKGED) the composition is skewed to basic and acidic residues. A compositionally biased stretch (low complexity) spans 375–392 (DGAPGSSGPKGDPGPYGT). The segment covering 400–409 (GTPGTGGRPG) has biased composition (gly residues). 2 short sequence motifs (cell attachment site) span residues 501-503 (RGD) and 554-556 (RGD). Over residues 600–613 (EGPPGPPGPGGPPG) the composition is skewed to pro residues. VWFA domains lie at 638–825 (DLLF…LHNV) and 849–1035 (DITM…YQSI).

It belongs to the type VI collagen family.

The protein resides in the secreted. It localises to the extracellular space. The protein localises to the extracellular matrix. Collagen VI acts as a cell-binding protein. This is Collagen alpha-1(VI) chain (col6a1) from Xenopus laevis (African clawed frog).